We begin with the raw amino-acid sequence, 1092 residues long: NAD-specific glutamate dehydrogenase (1092 aa).

K626 is a catalytic residue.

Belongs to the Glu/Leu/Phe/Val dehydrogenases family. In terms of assembly, homotetramer. Interacts with NNK1. Post-translationally, phosphorylated by a complex containing the NNK1 kinase.

It catalyses the reaction L-glutamate + NAD(+) + H2O = 2-oxoglutarate + NH4(+) + NADH + H(+). Its function is as follows. NAD(+)-dependent glutamate dehydrogenase which degrades glutamate to ammonia and alpha-ketoglutarate. The sequence is that of NAD-specific glutamate dehydrogenase (GDH2) from Saccharomyces cerevisiae (strain ATCC 204508 / S288c) (Baker's yeast).